Reading from the N-terminus, the 329-residue chain is UDP-2,3-diacylglucosamine pyrophosphatase LpxG (329 aa).

A helical membrane pass occupies residues 2-24; sequence FVSVGITASLTTILAAPVLTWVW. Positions 59, 61, 91, 123, 257, and 259 each coordinate a divalent metal cation.

Belongs to the metallophosphoesterase superfamily. LpxG family. The cofactor is Mn(2+).

The protein localises to the cell inner membrane. It catalyses the reaction UDP-2,3-diacyl-alpha-D-glucosamine + H2O = 2,3-diacyl-alpha-D-glucosaminyl 1-phosphate + UMP + 2 H(+). Its pathway is glycolipid biosynthesis; lipid IV(A) biosynthesis. Hydrolyzes the pyrophosphate bond of UDP-2,3-diacylglucosamine to form 2,3-diacylglucosamine 1-phosphate (lipid X) and UMP by catalyzing the attack of water at the alpha-P atom. Involved in the biosynthesis of lipid A, a phosphorylated glycolipid that anchors the lipooligosaccharide (LOS) to the outer membrane of the cell. Can functionally complement lpxH deficiency in E.coli. Overexpression of LpxG results in toxic accumulation of lipid X and profoundly reduces the infectivity of C.trachomatis. Can utilize UDP-2-N,3-O-bis((3R)-3-hydroxytetradecanoyl)-alpha-D-glucosamine as substrate in vitro, but the substrate is likely UDP-2-N-((3R)-3-hydroxyicosanoyl),3-O-(tetradecanoyl)-alpha-D-glucosamine in vivo. The polypeptide is UDP-2,3-diacylglucosamine pyrophosphatase LpxG (Chlamydia trachomatis serovar D (strain ATCC VR-885 / DSM 19411 / UW-3/Cx)).